Here is a 694-residue protein sequence, read N- to C-terminus: MAAAGPSTRASSAAAAAALSRRGRRGRCDEMAAAKAGAPGPASSPALLVLRSAPRPEESGCTGCLETPGEVAALPCSHSRCRGCASRAAGPGCRRCRPRGSGWARRRARDDGQAAAELMGERARRGQPEPCRPRRDGGAAASGPRPEPEPLAEPEFIFRTPIKLSKPGELSEEYGCLRKLRGEKLQEEKDCDDQIHKLLQEDSEMGKRKADEQKKRDEAVVLKTSLEQCPARLSDSENEEPSRGQMMQTHRSAFVSKNSSCSLAFLAGKLNTKVQRSQSCSDTVQDRVRSRLRTAPPNRAKITTITPGSTPIIGVLLSTQNNRCLSAPDLTIEKRLPFGSLSSLASLHKPERSISPESNDSISEELNHFKPIVCSPCTPPKRLPDGRVLSPLIIKSTPRNLTRSLQKQTSYEASPRILKKWEQIFQERQIKKTLSKATLTSLAPEAGEEFPGSDTIHSSKERPSLAFNTRLSRVQVLSECAGPTSTALECFPSVNQTKVEQDCVRKRSREFSLETCHSSEHGGASSGPSLEREQCEESGSTVDATLVKTCISTVMKTAAVNSLLPKNDVLGGVLKTKQQLKTLNHFDLGNGILVNSLGEEPIPSLRRGRKRRCKTKHLEQNGVKKLRPPSSDMDLAPKDPGLLEVGRKLQQEEEDQQLALQSHRMFDSERRTMSRRKGSVDQYLLRSSSLAGAK.

Composition is skewed to low complexity over residues 1–20 (MAAAGPSTRASSAAAAAALS) and 33–46 (AAKAGAPGPASSPA). The disordered stretch occupies residues 1–46 (MAAAGPSTRASSAAAAAALSRRGRRGRCDEMAAAKAGAPGPASSPA). Ser12 is modified (phosphoserine). The segment at 61–97 (CTGCLETPGEVAALPCSHSRCRGCASRAAGPGCRRCR) adopts an RING-type zinc-finger fold. The interval 100–153 (GSGWARRRARDDGQAAAELMGERARRGQPEPCRPRRDGGAAASGPRPEPEPLAE) is disordered. The segment covering 119–137 (MGERARRGQPEPCRPRRDG) has biased composition (basic and acidic residues). Residues 192–200 (DDQIHKLLQ) carry the UMI motif motif. Ser234 and Ser236 each carry phosphoserine. A Glycyl lysine isopeptide (Lys-Gly) (interchain with G-Cter in SUMO2) cross-link involves residue Lys273. Ser326 is subject to Phosphoserine. Residue Lys349 forms a Glycyl lysine isopeptide (Lys-Gly) (interchain with G-Cter in SUMO2) linkage. 2 positions are modified to phosphoserine: Ser390 and Ser396. The residue at position 397 (Thr397) is a Phosphothreonine. At Ser472 the chain carries Phosphoserine. Residue Lys498 forms a Glycyl lysine isopeptide (Lys-Gly) (interchain with G-Cter in SUMO2) linkage. The interval 515 to 537 (TCHSSEHGGASSGPSLEREQCEE) is disordered. Thr541 is subject to Phosphothreonine. The residue at position 630 (Ser630) is a Phosphoserine. The MIU motif motif lies at 651–668 (QEEEDQQLALQSHRMFDS). The LR motif signature appears at 675–687 (RRKGSVDQYLLRS). Ser679 carries the phosphoserine modification.

Belongs to the RNF169 family. Interacts with DYRK1B. In terms of processing, phosphorylated by DYRK1A; phosphorylation increases RNF169 ability to block accumulation of TP53BP1 at the DSB sites.

The protein localises to the chromosome. Its subcellular location is the nucleus. It localises to the nucleoplasm. The catalysed reaction is S-ubiquitinyl-[E2 ubiquitin-conjugating enzyme]-L-cysteine + [acceptor protein]-L-lysine = [E2 ubiquitin-conjugating enzyme]-L-cysteine + N(6)-ubiquitinyl-[acceptor protein]-L-lysine.. The protein operates within protein modification; protein ubiquitination. In terms of biological role, probable E3 ubiquitin-protein ligase that acts as a regulator of double-strand breaks (DSBs) repair following DNA damage. Functions in a non-canonical fashion to harness RNF168-mediated protein recruitment to DSB-containing chromatin, thereby contributing to regulation of DSB repair pathway utilization. Once recruited to DSB repair sites by recognizing and binding ubiquitin catalyzed by RNF168, competes with TP53BP1 and BRCA1 for association with RNF168-modified chromatin, thereby favouring homologous recombination repair (HRR) and single-strand annealing (SSA) instead of non-homologous end joining (NHEJ) mediated by TP53BP1. E3 ubiquitin-protein ligase activity is not required for regulation of DSBs repair. The protein is E3 ubiquitin-protein ligase RNF169 (Rnf169) of Mus musculus (Mouse).